Consider the following 181-residue polypeptide: NADH-quinone oxidoreductase subunit I (181 aa).

2 consecutive 4Fe-4S ferredoxin-type domains span residues 44–74 (LNRYPDGLEKCIGCELCAWACPADAIYVEGA) and 90–119 (RVYQINYLRCIGCGLCIEACPTRALTMTND). Residues C54, C57, C60, C64, C99, C102, C105, and C109 each coordinate [4Fe-4S] cluster.

The protein belongs to the complex I 23 kDa subunit family. NDH-1 is composed of 14 different subunits. Subunits NuoA, H, J, K, L, M, N constitute the membrane sector of the complex. [4Fe-4S] cluster serves as cofactor.

It is found in the cell membrane. The enzyme catalyses a quinone + NADH + 5 H(+)(in) = a quinol + NAD(+) + 4 H(+)(out). Its function is as follows. NDH-1 shuttles electrons from NADH, via FMN and iron-sulfur (Fe-S) centers, to quinones in the respiratory chain. The immediate electron acceptor for the enzyme in this species is believed to be menaquinone. Couples the redox reaction to proton translocation (for every two electrons transferred, four hydrogen ions are translocated across the cytoplasmic membrane), and thus conserves the redox energy in a proton gradient. The chain is NADH-quinone oxidoreductase subunit I from Mycobacterium marinum (strain ATCC BAA-535 / M).